The following is a 62-amino-acid chain: Conotoxin TsMLCL-02 (62 aa).

The signal sequence occupies residues 1–19 (MLCLPVFIILLLLASPAAP). A propeptide spanning residues 20-54 (NPLERRIQSDLIRAALEDADMKTEKGILSSIMGTL) is cleaved from the precursor.

This sequence belongs to the conotoxin T superfamily. As to expression, expressed by the venom duct.

The protein localises to the secreted. The protein is Conotoxin TsMLCL-02 of Conus tessulatus (Tessellate cone).